The chain runs to 448 residues: Asparagine--tRNA ligase (448 aa).

This sequence belongs to the class-II aminoacyl-tRNA synthetase family. In terms of assembly, homodimer.

The protein resides in the cytoplasm. It catalyses the reaction tRNA(Asn) + L-asparagine + ATP = L-asparaginyl-tRNA(Asn) + AMP + diphosphate + H(+). The sequence is that of Asparagine--tRNA ligase from Streptococcus pyogenes serotype M4 (strain MGAS10750).